We begin with the raw amino-acid sequence, 205 residues long: Holliday junction branch migration complex subunit RuvA (205 aa).

The interval 1 to 64 (MIGRIRGLLI…EDAQLLYGFI (64 aa)) is domain I. The segment at 65-143 (SKQERSLFRL…SLMEASVGSE (79 aa)) is domain II. The interval 144-156 (REFMLQSNYTAPE) is flexible linker. Positions 157 to 205 (AVNTAEEDAIAALLSLGYKPAQASKAVSSVYTDGMSSETLIKSALKSML) are domain III.

The protein belongs to the RuvA family. In terms of assembly, homotetramer. Forms an RuvA(8)-RuvB(12)-Holliday junction (HJ) complex. HJ DNA is sandwiched between 2 RuvA tetramers; dsDNA enters through RuvA and exits via RuvB. An RuvB hexamer assembles on each DNA strand where it exits the tetramer. Each RuvB hexamer is contacted by two RuvA subunits (via domain III) on 2 adjacent RuvB subunits; this complex drives branch migration. In the full resolvosome a probable DNA-RuvA(4)-RuvB(12)-RuvC(2) complex forms which resolves the HJ.

Its subcellular location is the cytoplasm. The RuvA-RuvB-RuvC complex processes Holliday junction (HJ) DNA during genetic recombination and DNA repair, while the RuvA-RuvB complex plays an important role in the rescue of blocked DNA replication forks via replication fork reversal (RFR). RuvA specifically binds to HJ cruciform DNA, conferring on it an open structure. The RuvB hexamer acts as an ATP-dependent pump, pulling dsDNA into and through the RuvAB complex. HJ branch migration allows RuvC to scan DNA until it finds its consensus sequence, where it cleaves and resolves the cruciform DNA. This chain is Holliday junction branch migration complex subunit RuvA, found in Shewanella halifaxensis (strain HAW-EB4).